The following is a 37-amino-acid chain: Large ribosomal subunit protein bL36c (37 aa).

It belongs to the bacterial ribosomal protein bL36 family.

The protein localises to the plastid. The protein resides in the chloroplast. This Oltmannsiellopsis viridis (Marine flagellate) protein is Large ribosomal subunit protein bL36c.